Reading from the N-terminus, the 176-residue chain is Putative phosphohydrolase YueE (176 aa).

Residues 23–139 (GVAHAIACAY…VKKADELDEE (117 aa)) form the HD domain.

In Bacillus subtilis (strain 168), this protein is Putative phosphohydrolase YueE (yueE).